The chain runs to 117 residues: MTRVKRGYIARRRRTKIRLFASTFRGAHSRLTRTSTQQKMRALVSTHRDRGRQKRDFRRLWITRINAVTHENRVSYSYSRLIHDLYKKQLLLNRKILAQIAISNRNCLYTICNESIK.

The protein belongs to the bacterial ribosomal protein bL20 family.

The protein localises to the plastid. The protein resides in the chloroplast. Its function is as follows. Binds directly to 23S ribosomal RNA and is necessary for the in vitro assembly process of the 50S ribosomal subunit. It is not involved in the protein synthesizing functions of that subunit. This Ceratophyllum demersum (Rigid hornwort) protein is Large ribosomal subunit protein bL20c.